Reading from the N-terminus, the 24-residue chain is Cryptonin (24 aa).

Antimicrobial peptide, active against the Gram-negative bacterium E.coli K12-594 (MIC=3.12 ug/ml), the Gram-positive bacteria B.subtilis KCTC 3086 (MIC=3.12 ug/ml), S.aureus KCTC 1928 (MIC=25 ug/ml) and M.luteus KCTC 3063 (MIC=1.56 ug/ml), the antibiotic resistant bacteria methicillin-resistant S.aureus (MRSA) (MIC=25 ug/ml) and vancomycin-resistant Enterococci (VRE) (MIC=25 ug/ml), and the fungi C.albicans KCTC 7965 (MIC=50 ug/ml) and C.tropicalis KCTC 1925 (MIC=3.12 ug/ml). Has very low hemolytic activity on rat erythrocytes. This Cryptotympana dubia (Korean horse cicada) protein is Cryptonin.